The primary structure comprises 132 residues: uncharacterized protein (132 aa).

The signal sequence occupies residues 1-19 (MKKALFLVGLVFTAGVISS). C20 carries the N-palmitoyl cysteine lipid modification. A lipid anchor (S-diacylglycerol cysteine) is attached at C20.

Its subcellular location is the cell membrane. This is an uncharacterized protein from Aquifex aeolicus (strain VF5).